We begin with the raw amino-acid sequence, 470 residues long: Protein C-ets-2 (470 aa).

A PNT domain is found at 85 to 170 (ATFSGFKKEQ…EHLEQMIKEN (86 aa)). The residue at position 225 (Ser-225) is a Phosphoserine. Residues 270–291 (ASGKPRDHDSAETGGDSFESSE) are disordered. A phosphoserine mark is found at Ser-296, Ser-299, and Ser-302. A DNA-binding region (ETS) is located at residues 364–444 (IQLWQFLLEL…SGKRYVYRFV (81 aa)).

It belongs to the ETS family. In terms of processing, phosphorylation by CDK10 at Ser-225 may create a phosphodegron that targets ETS2 for proteasomal degradation.

The protein localises to the nucleus. In terms of biological role, transcription factor activating transcription. Binds specifically the GGA DNA motif in gene promoters and stimulates transcription of those genes. This is Protein C-ets-2 (ETS2) from Bos taurus (Bovine).